Reading from the N-terminus, the 203-residue chain is Outer-membrane lipoprotein LolB (203 aa).

The first 18 residues, 1–18, serve as a signal peptide directing secretion; sequence MYRLLCLLALLTAAGLMG. Cys-19 is lipidated: N-palmitoyl cysteine. The S-diacylglycerol cysteine moiety is linked to residue Cys-19.

This sequence belongs to the LolB family. Monomer.

It is found in the cell outer membrane. In terms of biological role, plays a critical role in the incorporation of lipoproteins in the outer membrane after they are released by the LolA protein. The chain is Outer-membrane lipoprotein LolB from Cellvibrio japonicus (strain Ueda107) (Pseudomonas fluorescens subsp. cellulosa).